A 473-amino-acid chain; its full sequence is H(+)/Cl(-) exchange transporter ClcA (473 aa).

The Cytoplasmic portion of the chain corresponds to 1–32 (MKTDTSTFLAQQIVRLRRRDQIRRLMQRDKTP). A helical membrane pass occupies residues 33–69 (LAILFMAAVVGTLTGLVGVAFEKAVSWVQNMRIGALV). At 70-76 (QVADHAF) the chain is on the periplasmic side. A helical transmembrane segment spans residues 77–100 (LLWPLAFILSALLAMVGYFLVRKF). The Selectivity filter part_1 signature appears at 106 to 110 (GSGIP). Residue S107 participates in chloride binding. The helical intramembrane region spans 109–116 (IPEIEGAL). Topologically, residues 117–123 (EELRPVR) are cytoplasmic. Helical transmembrane passes span 124–141 (WWRVLPVKFIGGMGTLGA) and 148–166 (EGPTVQIGGNLGRMVLDVF). The short motif at 146 to 150 (GREGP) is the Selectivity filter part_2 element. The Cytoplasmic portion of the chain corresponds to 167-176 (RMRSAEARHT). 2 intramembrane regions (helical) span residues 177–189 (LLATGAAAGLSAA) and 193–201 (PLAGILFII). Residues 202–214 (EEMRPQFRYNLIS) are Cytoplasmic-facing. The chain crosses the membrane as a helical span at residues 215-232 (IKAVFTGVIMSSIVFRIF). The Periplasmic portion of the chain corresponds to 233-252 (NGEAPIIEVGKLSDAPVNTL). The helical transmembrane segment at 253-281 (WLYLILGIIFGCVGPVFNSLVLRTQDMFQ) threads the bilayer. The Cytoplasmic portion of the chain corresponds to 282–287 (RFHGGE). Residues 288–309 (IKKWVLMGGAIGGLCGILGLIE) form a helical membrane-spanning segment. Over 310-329 (PEAAGGGFNLIPIAAAGNFS) the chain is Periplasmic. 2 helical membrane-spanning segments follow: residues 330–349 (VGLLLFIFITRVVTTLLCFS) and 355–376 (GIFAPMLALGTLLGTAFGMAAA). The Selectivity filter part_3 motif lies at 355-359 (GIFAP). I356 and F357 together coordinate chloride. Topologically, residues 377 to 386 (VLFPQYHLEA) are periplasmic. The segment at residues 387-401 (GTFAIAGMGALMAAS) is an intramembrane region (helical). Positions 402–404 (VRA) form an intramembrane region, note=Loop between two helices. An intramembrane region (helical) is located at residues 405–416 (PLTGIVLVLEMT). Positions 417–421 (DNYQL) form an intramembrane region, note=Loop between two helices. Residues 422–438 (ILPMIITCLGATLLAQF) form a helical membrane-spanning segment. Residues 439–473 (LGGKPLYSTILARTLAKQDAEQAAKNQNASAGENT) lie on the Cytoplasmic side of the membrane. Position 445 (Y445) interacts with chloride.

It belongs to the chloride channel (TC 2.A.49) family. ClcA subfamily. Homodimer.

The protein resides in the cell inner membrane. It catalyses the reaction 2 chloride(in) + H(+)(out) = 2 chloride(out) + H(+)(in). In terms of biological role, proton-coupled chloride transporter. Functions as antiport system and exchanges two chloride ions for 1 proton. Probably acts as an electrical shunt for an outwardly-directed proton pump that is linked to amino acid decarboxylation, as part of the extreme acid resistance (XAR) response. The sequence is that of H(+)/Cl(-) exchange transporter ClcA from Salmonella choleraesuis (strain SC-B67).